We begin with the raw amino-acid sequence, 714 residues long: BRCA1-associated RING domain protein 1 (714 aa).

The RING-type zinc finger occupies 25-63 (CPLCLKLLNRPVLLPCDHVFCDSCVHKSSQVESGCPVCK). 2 disordered regions span residues 106–165 (YKND…QDWT) and 254–283 (KAQN…DAME). A compositionally biased stretch (basic and acidic residues) spans 118 to 134 (KHGESEDSEMTDKDVSK). Low complexity predominate over residues 135 to 147 (RSGGTDSSSRDGS). Basic and acidic residues-rich tracts occupy residues 155-165 (SDPRPKHQDWT) and 264-283 (SHTE…DAME). The C2HC pre-PHD-type zinc finger occupies 331–382 (ITICGFCQSARVSEATGEMLHYSRGRPVDGDDIFRSNVIHVHSACIEWAPQV). The segment at 402-451 (IKCTKCSLKGAALGCFVKSCRRSYHVPCAREISRCRWDYEDFLLLCPAHS) adopts a PHD-type zinc-finger fold. BRCT domains are found at residues 482 to 577 (EQTP…PFEI) and 598 to 713 (NKPK…HPVI).

In terms of assembly, component of a DNA-protein complex on WUS and WOX5 promoters. Interacts with SYD. Forms heterodimer with BRCA1. In terms of tissue distribution, expressed in the shoot apical meristem (SAM), roots, flowers, embryos and seedlings. Mostly expressed in flowers and siliques, and, to a lower extent, in roots, rosette leaves, inflorescence and young cauline leaves.

It is found in the nucleus. In terms of biological role, binds specifically to H3K4me3 regions of target genes (e.g. WUS and WOX5) promoters to repress their transcription via chromatin remodeling. Required for the shoot apical meristem (SAM) organization and maintenance, by confining WUS expression to the organizing center, and for the quiescent center (QC) development in the root apical meristem (RAM), by repressing WOX5 expression in the root proximal meristem. Plays a role in DNA repair and in cell-cycle control. Required for the repair of DNA double-strand breaks (DSBs), both natural and induced by genotoxic stress, by homologous recombination (HR). The protein is BRCA1-associated RING domain protein 1 of Arabidopsis thaliana (Mouse-ear cress).